Consider the following 354-residue polypeptide: MTRPELRDDVRIVDTTLRDGSHAQSHQFTESQVRDTVRALDGAGVEVIEVTHGDGLGGSTFNYGFSRISDLELVQVAADTAEQAKIAVLLVPGIGTADDLRKAADRGAEVVRIATHCTEADVSLQHFEIARDLGMQTCGFLMMAHRTTPEELARQARLMVDAGCQVPYVTDSAGALLMHEAKDRFDALITEVGDDAWVGYHGHQNMSLGVANSVIAYEAGVRYIDGSLCALGAGAGNSPTELLAAIFDRMNIATGLDVMATLDAAETVVRPYLNRWPKIDRNAIVQGWVGVYSSFLLHAETAGARYGVPVHEILRRCGELGYVGGQEDMIIDVAIQLAKVSGTVSEPSASLVAG.

Positions 10–262 constitute a Pyruvate carboxyltransferase domain; sequence VRIVDTTLRD…ATGLDVMATL (253 aa). Residue 18-19 coordinates substrate; that stretch reads RD. Asp-19 serves as a coordination point for Mn(2+). The active-site Proton acceptor is His-22. Substrate-binding residues include Ser-172 and His-201. Positions 201 and 203 each coordinate Mn(2+). Residue Tyr-292 coordinates substrate.

The protein belongs to the 4-hydroxy-2-oxovalerate aldolase family.

It carries out the reaction (S)-4-hydroxy-2-oxopentanoate = acetaldehyde + pyruvate. The protein is 4-hydroxy-2-oxovalerate aldolase 6 of Rhodococcus jostii (strain RHA1).